The following is an 885-amino-acid chain: METEPVSVQKVPAPPGSPCRQQDSALTPTPTMPPPEEPSEDYEHSQSPAEQAIQEEFQFLRCPSCQAQAKCPKLLPCLHTLCSGCLEAPGLQCPICKAPGQADANGEALDNVFFESLQRRLAVFRQIVDAQAACTRCKGLADFWCFECEQLICSKCFEAHQWYLKHEARPLADLRDNSVSSFLDSTRKSNIFCSNTNHRNPALTDIYCRGCAKPLCCTCALLDRNHSHLHCDIGEEIQQWHEELGTMTQTLEEQGRTFDSAHAQMCSAIGQLDHARADIEKQIRARVRQVVDYVQAQERELLEAVNDRYQRDYQEIAGQLSCLEAVLQRIRTSGALVKRMKLYASDQEVLDMHSFLRKALCSLRQEEPQNQKVQLLTRGFEEFKLCLQDFISCITQRINAAVASPEAASNQPEAASTHPVTTSTPEDLEQPKEVQSVQAQALELSKTQPVAMVKTVPGAHPVPVYAFSMQGPTYREEASQTVGSMKRKCSHEDCSRKIIKMESTEENEDRLATSSPEQSWPSTFKATSPPHLDGTSNPESTVPEKKILLPNNNHVTSDTGETEERVVVISSSEDSDTENLSSHELDDSSSESSSLQLEGPNSLKALDESLAEPHLEDRTLVFFDLKIDNETQKISQLAAVNRESKFRVLIQPEAFSVYSKAVSLEAGLRHFLSFLTTMHRPILACSRLWGPGLPIFFQTLSDINKLWEFQDTISGFLAVLPLIRERIPGASSFKLGNLAKTYLARNMSERSALASVLAMRDLCCLLEISPGLPLAQHIYSFSSLQCFASLQPLIQASVLPQSEARLLALHNVSFVELLNAYRTNRQEGLKKYVHYLSLQTTPLSSSASTQVAQFLQALSTHMEGLLEGHAPAGAEGKAESKGCLA.

The segment at 1–48 (METEPVSVQKVPAPPGSPCRQQDSALTPTPTMPPPEEPSEDYEHSQSP) is disordered. Position 17 is a phosphoserine; by HIPK2 (Ser-17). Phosphoserine; by HIPK2 and MAPK1 occurs at positions 45 and 47. Zn(2+) is bound by residues Cys-62 and Cys-65. The segment at 62–97 (CPSCQAQAKCPKLLPCLHTLCSGCLEAPGLQCPICK) adopts an RING-type zinc-finger fold. Residue Lys-70 forms a Glycyl lysine isopeptide (Lys-Gly) (interchain with G-Cter in SUMO); alternate linkage. A Glycyl lysine isopeptide (Lys-Gly) (interchain with G-Cter in SUMO2); alternate cross-link involves residue Lys-70. Zn(2+)-binding residues include Cys-77, His-79, Cys-82, Cys-85, Cys-93, Cys-96, Cys-134, Cys-137, Cys-156, and His-160. 2 consecutive B box-type zinc fingers follow at residues 129 to 171 (DAQA…ARPL) and 188 to 239 (KSNI…EIQQ). Lys-165 is covalently cross-linked (Glycyl lysine isopeptide (Lys-Gly) (interchain with G-Cter in SUMO); alternate). Lys-165 participates in a covalent cross-link: Glycyl lysine isopeptide (Lys-Gly) (interchain with G-Cter in SUMO2); alternate. 4 residues coordinate Zn(2+): Cys-193, His-198, Cys-219, and His-226. The stretch at 295 to 331 (QAQERELLEAVNDRYQRDYQEIAGQLSCLEAVLQRIR) forms a coiled coil. A Glycyl lysine isopeptide (Lys-Gly) (interchain with G-Cter in SUMO2); alternate cross-link involves residue Lys-384. Lys-384 participates in a covalent cross-link: Glycyl lysine isopeptide (Lys-Gly) (interchain with G-Cter in ubiquitin); alternate. Ser-404 is subject to Phosphoserine. A disordered region spans residues 404 to 434 (SPEAASNQPEAASTHPVTTSTPEDLEQPKEV). A compositionally biased stretch (polar residues) spans 407–425 (AASNQPEAASTHPVTTSTP). Residues 458-565 (GAHPVPVYAF…TSDTGETEER (108 aa)) are interaction with PER2. Residue Lys-486 forms a Glycyl lysine isopeptide (Lys-Gly) (interchain with G-Cter in SUMO2); alternate linkage. A Glycyl lysine isopeptide (Lys-Gly) (interchain with G-Cter in ubiquitin); alternate cross-link involves residue Lys-486. The Nuclear localization signal motif lies at 486-500 (KRKCSHEDCSRKIIK). Residue Lys-488 forms a Glycyl lysine isopeptide (Lys-Gly) (interchain with G-Cter in SUMO2) linkage. Residues Lys-497 and Lys-500 each participate in a glycyl lysine isopeptide (Lys-Gly) (interchain with G-Cter in SUMO2); alternate cross-link. Lys-497 bears the N6-acetyllysine; alternate mark. Residue Lys-500 forms a Glycyl lysine isopeptide (Lys-Gly) (interchain with G-Cter in SUMO); alternate linkage. The tract at residues 500 to 599 (KMESTEENED…SESSSLQLEG (100 aa)) is disordered. Phosphoserine occurs at positions 503 and 514. Over residues 512–526 (ATSSPEQSWPSTFKA) the composition is skewed to polar residues. Ser-515 is subject to Phosphoserine; by MAPK1. Ser-522 carries the post-translational modification Phosphoserine. At Lys-525 the chain carries N6-acetyllysine. Ser-528 is modified (phosphoserine; by CDK1 and CDK2). Position 535 is a phosphothreonine (Thr-535). Position 536 is a phosphoserine (Ser-536). Ser-540 carries the post-translational modification Phosphoserine; by MAPK1. Positions 550–559 (PNNNHVTSDT) are enriched in polar residues. Residues 566 to 572 (VVVISSS) are sumo interaction motif (SIM). Ser-575 is modified (phosphoserine; by CK2). The residue at position 609 (Ser-609) is a Phosphoserine.

As to quaternary structure, key component of PML bodies. PML bodies are formed by the interaction of PML homodimers (via SUMO-binding motif) with sumoylated PML, leading to the assembly of higher oligomers. Several types of PML bodies have been observed. PML bodies can form hollow spheres that can sequester target proteins inside. Interacts (via SUMO-binding motif) with sumoylated proteins. Interacts (via C-terminus) with p53/TP53. Recruits p53/TP53 and CHEK2 into PML bodies, which promotes p53/TP53 phosphorylation at 'Ser-20' and prevents its proteasomal degradation. Interacts with MDM2, and sequesters MDM2 in the nucleolus, thereby preventing ubiquitination of p53/TP53. Interaction with PML-RARA oncoprotein and certain viral proteins causes disassembly of PML bodies and abolishes the normal PML function. Interacts with TERT, SIRT1, TOPBP1, TRIM27 and TRIM69. Interacts with ELF4 (via C-terminus). Interacts with Lassa virus Z protein and rabies virus phosphoprotein. Interacts (in the cytoplasm) with TGFBR1, TGFBR2 and PKM. Interacts (via the coiled-coil domain and when sumoylated) with SATB1. Interacts with UBE2I; the interaction is enhanced by arsenic binding. Interacts with SMAD2, SMAD3, DAXX, RPL11, HIPK2 and MTOR. Interacts with ITPR3, PPP1A and RB1. Interacts with RNF4, NLRP3, MAGEA2, RBL2, PER2, E2F4 and MAPK7/BMK1. Interacts with CSNK2A1 and CSNK2A3. Interacts with ANKRD2; the interaction is direct. Interacts with PPARGC1A and KAT2A. Interacts (via SUMO-interacting motif) with sumoylated MORC3. Interacts with TRIM16. Interacts with PRDM1. Interacts (via RING-type zinc finger) with EIF4E; the interaction reduces EIF4E affinity for the 5' m7G cap of mRNA, thus reducing nuclear export of cyclin CCND1. In terms of processing, ubiquitinated; mediated by RNF4, RNF111, UHRF1, UBE3A/E6AP, BCR(KLHL20) E3 ubiquitin ligase complex, SIAH1 or SIAH2 and leading to subsequent proteasomal degradation. 'Lys-6'-, 'Lys-11'-, 'Lys-48'- and 'Lys-63'-linked polyubiquitination by RNF4 is polysumoylation-dependent. Ubiquitination by RNF111 is polysumoylation-dependent. Ubiquitination by BCR(KLHL20) E3 ubiquitin ligase complex requires CDK1/2-mediated phosphorylation at Ser-528 which in turn is recognized by prolyl-isopeptidase PIN1 and PIN1-catalyzed isomerization further potentiates PML interaction with KLHL20. Sumoylation regulates PML's: stability in response to extracellular or intracellular stimuli, transcription directly and indirectly, through sequestration of or dissociation of the transcription factors from PML-NBs, ability to regulate apoptosis and its anti-viral activities. It is also essential for: maintaining proper PML nuclear bodies (PML-NBs) structure and normal function, recruitment of components of PML-NBs, the turnover and retention of PML in PML-NBs and the integrity of PML-NBs. Undergoes 'Lys-11'-linked sumoylation. Sumoylation on all three sites (Lys-70, Lys-165 and Lys-500) is required for nuclear body formation. Sumoylation on Lys-165 is a prerequisite for sumoylation on Lys-70. Lys-70 and Lys-165 are sumoylated by PISA1 and PIAS2. PIAS1-mediated sumoylation of PML promotes its interaction with CSNK2A1/CK2 and phosphorylation at Ser-575 which in turn triggers its ubiquitin-mediated degradation. Sumoylation at Lys-500 by RANBP2 is essential for the proper assembly of PML-NBs. Desumoylated by SENP1, SENP2, SENP3, SENP5 and SENP6. Post-translationally, phosphorylation is a major regulatory mechanism that controls PML protein abundance and the number and size of PML nuclear bodies (PML-NBs). Phosphorylated in response to DNA damage, probably by ATR. HIPK2-mediated phosphorylation at Ser-17, Ser-45 and Ser-47 leads to increased accumulation of PML protein and its sumoylation and is required for the maximal pro-apoptotic activity of PML after DNA damage. MAPK1- mediated phosphorylations at Ser-404, Ser-515 and Ser-540 and CDK1/2-mediated phosphorylation at Ser-528 promote PIN1-dependent PML degradation. CK2-mediated phosphorylation at Ser-575 primes PML ubiquitination via an unidentified ubiquitin ligase. In terms of processing, acetylation at Lys-497 is essential for its nuclear localization. Deacetylated at Lys-497 by SIRT1 and this deacetylation promotes PML control of PER2 nuclear localization.

Its subcellular location is the nucleus. The protein resides in the nucleoplasm. It is found in the cytoplasm. It localises to the PML body. The protein localises to the nucleolus. Its subcellular location is the endoplasmic reticulum membrane. The protein resides in the early endosome membrane. Its function is as follows. Functions via its association with PML-nuclear bodies (PML-NBs) in a wide range of important cellular processes, including tumor suppression, transcriptional regulation, apoptosis, senescence, DNA damage response, and viral defense mechanisms. Acts as the scaffold of PML-NBs allowing other proteins to shuttle in and out, a process which is regulated by SUMO-mediated modifications and interactions. Inhibits EIF4E-mediated mRNA nuclear export by reducing EIF4E affinity for the 5' 7-methylguanosine (m7G) cap of target mRNAs. Positively regulates p53/TP53 by acting at different levels (by promoting its acetylation and phosphorylation and by inhibiting its MDM2-dependent degradation). Regulates phosphorylation of ITPR3 and plays a role in the regulation of calcium homeostasis at the endoplasmic reticulum. Regulates RB1 phosphorylation and activity. Acts as both a negative regulator of PPARGC1A acetylation and a potent activator of PPAR signaling and fatty acid oxidation. Regulates translation of HIF1A by sequestering MTOR, and thereby plays a role in neoangiogenesis and tumor vascularization. Regulates PER2 nuclear localization and circadian function. Cytoplasmic PML is involved in the regulation of the TGF-beta signaling pathway. Required for normal development of the brain cortex during embryogenesis. Plays a role in granulopoiesis or monopoiesis of myeloid progenitor cells. May play a role regulating stem and progenitor cell fate in tissues as diverse as blood, brain and breast. Shows antiviral activity towards lymphocytic choriomeningitis virus (LCMV) and the vesicular stomatitis virus (VSV). The sequence is that of Protein PML (Pml) from Mus musculus (Mouse).